A 224-amino-acid chain; its full sequence is Homeobox protein Hox-B6 (224 aa).

The short motif at 127–132 is the Antp-type hexapeptide element; it reads VYPWMQ. The homeobox DNA-binding region spans 146–205; the sequence is GRRGRQTYTRYQTLELEKEFHYNRYLTRRRRIEIAHALCLTERQIKIWFQNRRMKWKKES. Serine 214 is modified (phosphoserine).

Belongs to the Antp homeobox family.

It localises to the nucleus. Sequence-specific transcription factor which is part of a developmental regulatory system that provides cells with specific positional identities on the anterior-posterior axis. The chain is Homeobox protein Hox-B6 (HOXB6) from Homo sapiens (Human).